Here is a 210-residue protein sequence, read N- to C-terminus: Guanylate kinase (210 aa).

A Guanylate kinase-like domain is found at 6 to 186 (GLLGIISAPS…ALIYLQSVIL (181 aa)). An ATP-binding site is contributed by 13–20 (APSGAGKS).

Belongs to the guanylate kinase family.

It is found in the cytoplasm. The catalysed reaction is GMP + ATP = GDP + ADP. Essential for recycling GMP and indirectly, cGMP. The sequence is that of Guanylate kinase from Blochmanniella floridana.